A 1155-amino-acid chain; its full sequence is MNKNIFITLLISSLLLLSGCTGDTCIDPDDFGFIKFNVSSRYNPEEITSRQEGDQVAPWRDSAYKVNGYPLTVMVRPWSYILGDKNTSGQLSAWCPWYGQKNNTTTLAAFCVKLQPCTFWDNARLDMCTPNPANQNDAMISNPPCIMTDGVGLYFLIAAKNTDPNISPDSQRKPQGITQHLGELTSSVGYEFYSISSTGQFLPAGGINYQYKGEDKSKYAQSPLYFKIIDKFYDDNSGQYRLVIKSGVTDTRPDPLQFLTDLIKGVLFGKDGIIKKTYQQIIDTPGYRMSVSAILTLYIMFTGFSFLIGNINLTHVELIVRILKVSIVSILLSTDKAWTFFHDYLFVFFIDGVQQILQIINEAAATGPGSQSLLGLLISPQTLSKLFSLLFVDWLGFIYIILYLIALYFIFFLIFKATIIYLTALITIGMIIIMGPIFICFMLFNITRSLFENWLRQLISYALQPIILFAGIAFISMIIRTEIYSTLGFGVCKHDFPNLGPINEIFGSFLEDIDPSLGNSIFYWWFPVPMKGGINNFHKAKILVPEDHIIVDDSCKNDPDKCKHCAAYECIDERYIELPFLDLVKDAKRISNFINGKFVQLDGILLIFVSIYLLSKFNDTAISTAQFIAGTSGNLTDIQKVNQQSYESAAKQMNRPLSYVAKTVSVPVTTRVSAKLEETSMFFAKGFEDIMMGRLEKQALGSSANKAVQNEVKRKYGIDSKDVKMNAITDYENGISGLLKNLPKGNELKAKELSQMKFTQLRDKIAANKYGVKDYAALSEEQKRELDKSLKDANLRELASDANFTKDYQDAYKYAHQEMSGRGVGLFGKNIKPLRSWQEMEHRVDTKRKLKEERRVGIGEKLYAGYTGIKRGALTAIVGKDLRDAYEGNLTSAEWHDFEYNDPRLRTYSEKLKDDEKAREREELQMHINKETLAAQADILSPEYLARLEKAGRQSDVEYYQELAQRKLIHEVRGRLFEEGEPVMMGDRFMREKATDSQMRDMIDNAHRKHAEFIEGDRYTRRQEHYDIMHEKAEGNLEQTYKELKDHFKRDDINIEEMPALIAQKIKDTEQGPEVDAKITEELNNFNADVKNYEYSTEVLNKIEDRKQAITDEVNAQIDQINKYRENAKMEKYVRPIVNEGRKLRKLEDHLRGMK.

Positions 1-19 are cleaved as a signal peptide; that stretch reads MNKNIFITLLISSLLLLSG. C20 is lipidated: N-palmitoyl cysteine. C20 is lipidated: S-diacylglycerol cysteine. The next 4 helical transmembrane spans lie at 291 to 311, 395 to 415, 424 to 444, and 459 to 479; these read VSAI…IGNI, LGFI…FLIF, ALIT…FMLF, and ISYA…SMII.

Belongs to the TrbL/VirB6 family.

Its subcellular location is the cell membrane. This is an uncharacterized protein from Rickettsia felis (strain ATCC VR-1525 / URRWXCal2) (Rickettsia azadi).